The chain runs to 91 residues: N.vectensis toxin 8 (91 aa).

A signal peptide spans 1–26 (MNSLLKVAVVCLVMLVACFVPRVILT). 3 disulfides stabilise this stretch: C45/C76, C47/C67, and C60/C77.

In terms of tissue distribution, expressed in ectodermal gland cells.

Functionally, has toxic effects on zebrafish larvae. It causes contractile paralysis and twitching of the tail within 20 minutes, followed by death within 30 minutes. Does not show any toxicity when injected into arthropods (cherry shrimps or grass shrimps). The sequence is that of N.vectensis toxin 8 from Nematostella vectensis (Starlet sea anemone).